Consider the following 300-residue polypeptide: ADP-ribosyl cyclase/cyclic ADP-ribose hydrolase 1 (300 aa).

Over M1–R21 the chain is Cytoplasmic. Residues A22–V42 traverse the membrane as a helical; Signal-anchor for type II membrane protein segment. At V43–I300 the chain is on the extracellular side. 3 disulfides stabilise this stretch: C67–C82, C99–C180, and C160–C173. A glycan (N-linked (GlcNAc...) asparagine) is linked at N100. Residue C119 is part of the active site. The N-linked (GlcNAc...) asparagine glycan is linked to N164. C201 is a catalytic residue. Residues N209 and N219 are each glycosylated (N-linked (GlcNAc...) asparagine). Disulfide bonds link C254-C275 and C287-C296.

It belongs to the ADP-ribosyl cyclase family. In terms of assembly, homodimer. As to expression, expressed at high levels in pancreas, liver, kidney, brain, testis, ovary, placenta, malignant lymphoma and neuroblastoma.

It is found in the cell surface. Its subcellular location is the membrane. The catalysed reaction is 2'-phospho-cyclic ADP-ribose + nicotinate = nicotinate-adenine dinucleotide phosphate. The enzyme catalyses NAD(+) = cyclic ADP-beta-D-ribose + nicotinamide + H(+). It carries out the reaction NAD(+) + H2O = ADP-D-ribose + nicotinamide + H(+). It catalyses the reaction cyclic ADP-beta-D-ribose + H2O = ADP-D-ribose. The catalysed reaction is NADP(+) = 2'-phospho-cyclic ADP-ribose + nicotinamide. The enzyme catalyses nicotinate + NADP(+) = nicotinate-adenine dinucleotide phosphate + nicotinamide. With respect to regulation, ATP inhibits the cADPR hydrolyzing activity. Synthesizes cyclic ADP-ribose (cADPR), a second messenger for glucose-induced insulin secretion. Synthesizes the Ca(2+) mobilizer nicotinate-adenine dinucleotide phosphate, NAADP(+), from 2'-phospho-cADPR and nicotinic acid, as well as from NADP(+) and nicotinic acid. At both pH 5.0 and pH 7.4 preferentially transforms 2'-phospho-cADPR into NAADP(+), while preferentially cleaving NADP(+) to cADPR and ADPRP rather than into NADDP(+). Has cADPR hydrolase activity. In Homo sapiens (Human), this protein is ADP-ribosyl cyclase/cyclic ADP-ribose hydrolase 1 (CD38).